The primary structure comprises 286 residues: MKCIAIDLDGTLLNKESVISAENREAIKRAVDAGILVTICTGRATFDVKALLDDLDIPIIAANGGTIHDTGYRLISRTLMDQEAGKAIADYLLSKNIYFEVYTDDHLLSPFDGEAKLHAELDILKSANPNEQTDDLWQGAMTQFKQFGIKPIPHIESVFDGGENIYKLLCFSFDMDKLKQAKEELKHHKKLAQTSSGKHIIEILPASSGKGRALTKLADIYGIETQDIYAIGDSPNDLSMFEVAGHRIAMENAIDELKEKSTFVTKSNDENGVAYFIDQLLSGQYA.

D7 serves as the catalytic Nucleophile. D7 provides a ligand contact to Mg(2+). Phosphate is bound at residue L8. Residue D9 coordinates Mg(2+). Residues 41–42 (TG) and K210 each bind phosphate. The Mg(2+) site is built by D233 and S234. N236 provides a ligand contact to phosphate.

It belongs to the HAD-like hydrolase superfamily. Cof family. Requires Mg(2+) as cofactor.

The enzyme catalyses 5-amino-6-(5-phospho-D-ribitylamino)uracil + H2O = 5-amino-6-(D-ribitylamino)uracil + phosphate. It participates in cofactor biosynthesis; riboflavin biosynthesis; 5-amino-6-(D-ribitylamino)uracil from GTP: step 4/4. Functionally, catalyzes the dephosphorylation of the riboflavin precursor 5-amino-6-(5-phospho-D-ribitylamino)uracil and of flavin mononucleotide (FMN) in vitro. Also catalyzes the dephosphorylation of phosphorylated 5-6 carbon sugars and monophosphate nucleotides (NMP) in vitro. The polypeptide is 5-amino-6-(5-phospho-D-ribitylamino)uracil phosphatase YwtE (ywtE) (Bacillus subtilis (strain 168)).